The following is a 560-amino-acid chain: Ribonuclease J 1 (560 aa).

Zn(2+)-binding residues include histidine 76, histidine 78, aspartate 80, histidine 81, histidine 144, and aspartate 166. 366-370 contacts substrate; it reads HTSGH. Zn(2+) is bound at residue histidine 392.

The protein belongs to the metallo-beta-lactamase superfamily. RNA-metabolizing metallo-beta-lactamase-like family. Bacterial RNase J subfamily. Homodimer, may be a subunit of the RNA degradosome. Zn(2+) serves as cofactor.

The protein localises to the cytoplasm. An RNase that has 5'-3' exonuclease and possibly endonuclease activity. Involved in maturation of rRNA and in some organisms also mRNA maturation and/or decay. Has an overlapping but not completely redundant role with RNase J2 in the decay of mRNA. The polypeptide is Ribonuclease J 1 (Streptococcus pyogenes serotype M3 (strain ATCC BAA-595 / MGAS315)).